The sequence spans 423 residues: Elongation factor 1-alpha (423 aa).

The tr-type G domain maps to 5-211; sequence KEHINLAFIG…DNLEPPEKPT (207 aa). A G1 region spans residues 14 to 21; the sequence is GHVDHGKS. Residue 14 to 21 participates in GTP binding; it reads GHVDHGKS. Position 21 (Ser21) interacts with Mg(2+). Residues 60 to 64 form a G2 region; it reads GVTID. The G3 stretch occupies residues 81-84; it reads DCPG. GTP contacts are provided by residues 81–85 and 136–139; these read DCPGH and NKMD. The tract at residues 136-139 is G4; it reads NKMD. The G5 stretch occupies residues 175–177; that stretch reads SAF.

The protein belongs to the TRAFAC class translation factor GTPase superfamily. Classic translation factor GTPase family. EF-Tu/EF-1A subfamily.

Its subcellular location is the cytoplasm. It catalyses the reaction GTP + H2O = GDP + phosphate + H(+). GTP hydrolase that promotes the GTP-dependent binding of aminoacyl-tRNA to the A-site of ribosomes during protein biosynthesis. The protein is Elongation factor 1-alpha of Methanopyrus kandleri (strain AV19 / DSM 6324 / JCM 9639 / NBRC 100938).